The chain runs to 263 residues: Chymotrypsinogen 2 (263 aa).

The N-terminal stretch at 1–18 (MAFLWLLSCFALLGTAFG) is a signal peptide. Intrachain disulfides connect Cys-19/Cys-140, Cys-60/Cys-76, Cys-154/Cys-219, Cys-186/Cys-200, and Cys-209/Cys-238. The Peptidase S1 domain occupies 34-261 (IVNGEDAVPG…LIPWVQQILQ (228 aa)). Residue His-75 is the Charge relay system of the active site. At Ser-93 the chain carries Phosphoserine. Asp-120 functions as the Charge relay system in the catalytic mechanism. Ser-213 (charge relay system) is an active-site residue.

The protein belongs to the peptidase S1 family.

Its subcellular location is the secreted. It localises to the extracellular space. The catalysed reaction is Preferential cleavage: Tyr-|-Xaa, Trp-|-Xaa, Phe-|-Xaa, Leu-|-Xaa.. The protein is Chymotrypsinogen 2 (CTRB1) of Canis lupus familiaris (Dog).